Reading from the N-terminus, the 399-residue chain is RNA-binding protein cabeza (399 aa).

A compositionally biased stretch (gly residues) spans 1-12 (MERGGYGGGSGQ). Residues 1–82 (MERGGYGGGS…RGGNSYGNGG (82 aa)) are disordered. Residues 24–34 (YQQMPNKTGNY) show a composition bias toward polar residues. Residues 43 to 69 (KQGGGYDSGSGHRGSGGSGNGGGGGGS) are compositionally biased toward gly residues. One can recognise an RRM domain in the interval 120–206 (DTIFVSGMDP…NAIKVSLAQR (87 aa)). Disordered regions lie at residues 209 to 276 (NWNK…QPRD) and 300 to 399 (TPKG…SRPY). The span at 212-271 (KGGGGGGGGGGRGGFGGRRGGGGGGGGGGGGGGRFDRGGGGGGGRYDRGGGGGGGGGGGN) shows a compositional bias: gly residues. The segment at 275 to 304 (RDGDWKCNSCNNTNFAWRNECNRCKTPKGD) adopts a RanBP2-type zinc-finger fold. Composition is skewed to gly residues over residues 308-339 (SSGGGGGGGYGGGGGGGGYDRGNDRGSGGGGY), 347-361 (NSQGGGGGGGGGGGY), and 368-380 (NGGGRGGRGGGGG). The segment covering 387 to 399 (PMRNDGGMRSRPY) has biased composition (low complexity).

This sequence belongs to the RRM TET family. Ubiquitous. Enriched in the brain and central nervous system during embryogenesis. Enriched in the adult head. Embryos contain both isoforms A and B, whereas later in development (heads and torsos) only isoform B is detected.

It localises to the nucleus. In terms of biological role, may participate in a function common to the expression of most genes transcribed by RNA polymerase II. The chain is RNA-binding protein cabeza (caz) from Drosophila melanogaster (Fruit fly).